Here is a 168-residue protein sequence, read N- to C-terminus: Protein GRE1 (168 aa).

The tract at residues 1–168 is disordered; it reads MSNLLNKFAD…DDDSGNQGVW (168 aa). Basic and acidic residues-rich tracts occupy residues 8–20 and 27–43; these read FADK…HDER and DQTR…REFR. 2 stretches are compositionally biased toward polar residues: residues 56–81 and 120–144; these read NQGN…GNDF and TSGQ…SNIG.

It localises to the cytoplasm. The sequence is that of Protein GRE1 (GRE1) from Saccharomyces cerevisiae (strain ATCC 204508 / S288c) (Baker's yeast).